The following is a 72-amino-acid chain: MNYYGNYYGGLGYGYGGFDDLGYGYGCGCGSFRRLGYGGGYGGYGYGSGFGGYGYRSCRPSCYGGYGFSGFY.

Belongs to the KRTAP type 19 family. In terms of assembly, interacts with hair keratins.

In terms of biological role, in the hair cortex, hair keratin intermediate filaments are embedded in an interfilamentous matrix, consisting of hair keratin-associated proteins (KRTAP), which are essential for the formation of a rigid and resistant hair shaft through their extensive disulfide bond cross-linking with abundant cysteine residues of hair keratins. The matrix proteins include the high-sulfur and high-glycine-tyrosine keratins. This Homo sapiens (Human) protein is Keratin-associated protein 19-5 (KRTAP19-5).